The sequence spans 92 residues: Small ribosomal subunit protein uS19 (92 aa).

It belongs to the universal ribosomal protein uS19 family.

Its function is as follows. Protein S19 forms a complex with S13 that binds strongly to the 16S ribosomal RNA. This Caulobacter sp. (strain K31) protein is Small ribosomal subunit protein uS19.